A 287-amino-acid chain; its full sequence is MAAITAALVKELRERTGEGMMDCKKALEKAGGDIEKAIDDMRASGAIKAAKKAGNVAAEGAIAVKTDGTSAVLLEVNSQTDFLALQDDFKNFVAESLEEAFAQKLTDAAPLIASREAAREALVAKCGENVNIRRLVRVEGDVVGAYLHGNKIGAVVVLKGGDVELAKNIAMHVAASNPEFLDSSEISAEAIEREKNVFLQLNADKIAGKPENIVENMINGRITKFKAEASLKEQAFVMNPEVKVGELAKKAGAEIVSFTYFKVGEGIEKPVDDFAAEVAAQVAAAKQ.

Residues 80–83 (TDFL) form an involved in Mg(2+) ion dislocation from EF-Tu region.

The protein belongs to the EF-Ts family.

The protein localises to the cytoplasm. Its function is as follows. Associates with the EF-Tu.GDP complex and induces the exchange of GDP to GTP. It remains bound to the aminoacyl-tRNA.EF-Tu.GTP complex up to the GTP hydrolysis stage on the ribosome. The protein is Elongation factor Ts of Pseudomonas putida (strain ATCC 700007 / DSM 6899 / JCM 31910 / BCRC 17059 / LMG 24140 / F1).